A 507-amino-acid chain; its full sequence is DNA nucleotidylexotransferase (507 aa).

The Nuclear localization signal motif lies at 11–17; that stretch reads PLRKKAK. Residues 27–124 form the BRCT domain; the sequence is QHNVKFKEIV…RPVEIQNRHL (98 aa). Residues 254–258 form an involved in DNA binding region; the sequence is VGLKT. A 2'-deoxyribonucleoside 5'-triphosphate-binding positions include 329–334 and 338–341; these read GFRRGK and HDVD. Residues Asp-339, Asp-341, and Asp-431 each contribute to the Mg(2+) site. 446-447 contacts a 2'-deoxyribonucleoside 5'-triphosphate; the sequence is GW.

The protein belongs to the DNA polymerase type-X family. Mg(2+) is required as a cofactor. In terms of tissue distribution, found in the thymus and not in the spleen, kidney, intestine, or liver.

The protein resides in the nucleus. It catalyses the reaction DNA(n) + a 2'-deoxyribonucleoside 5'-triphosphate = DNA(n+1) + diphosphate. In terms of biological role, template-independent DNA polymerase which catalyzes the random addition of deoxynucleoside 5'-triphosphate to the 3'-end of a DNA initiator. One of the in vivo functions of this enzyme is the addition of nucleotides at the junction (N region) of rearranged Ig heavy chain and T-cell receptor gene segments during the maturation of B- and T-cells. The polypeptide is DNA nucleotidylexotransferase (dntt) (Xenopus laevis (African clawed frog)).